Here is a 353-residue protein sequence, read N- to C-terminus: Quinolinate synthase (353 aa).

H47 and S68 together coordinate iminosuccinate. Position 113 (C113) interacts with [4Fe-4S] cluster. Iminosuccinate-binding positions include 139-141 (YAN) and S156. Residue C200 coordinates [4Fe-4S] cluster. Iminosuccinate is bound by residues 226–228 (HPE) and T243. Position 297 (C297) interacts with [4Fe-4S] cluster.

It belongs to the quinolinate synthase family. Type 1 subfamily. [4Fe-4S] cluster is required as a cofactor.

Its subcellular location is the cytoplasm. The enzyme catalyses iminosuccinate + dihydroxyacetone phosphate = quinolinate + phosphate + 2 H2O + H(+). It functions in the pathway cofactor biosynthesis; NAD(+) biosynthesis; quinolinate from iminoaspartate: step 1/1. In terms of biological role, catalyzes the condensation of iminoaspartate with dihydroxyacetone phosphate to form quinolinate. This chain is Quinolinate synthase, found in Erwinia tasmaniensis (strain DSM 17950 / CFBP 7177 / CIP 109463 / NCPPB 4357 / Et1/99).